The following is a 334-amino-acid chain: S-adenosylmethionine decarboxylase proenzyme (334 aa).

Residue phenylalanine 7 participates in substrate binding. Catalysis depends on residues glutamate 8 and glutamate 11. Position 67 (glutamate 67) interacts with substrate. Serine 68 acts as the Schiff-base intermediate with substrate; via pyruvic acid in catalysis. Serine 68 bears the Pyruvic acid (Ser); by autocatalysis mark. Cysteine 82 acts as the Proton donor; for catalytic activity in catalysis. Phenylalanine 223 is a binding site for substrate. Active-site proton acceptor; for processing activity residues include serine 229 and histidine 243. Glutamate 247 serves as a coordination point for substrate. Serine 298 bears the Phosphoserine mark.

It belongs to the eukaryotic AdoMetDC family. Heterotetramer of two alpha and two beta chains. Pyruvate serves as cofactor. Post-translationally, is synthesized initially as an inactive proenzyme. Formation of the active enzyme involves a self-maturation process in which the active site pyruvoyl group is generated from an internal serine residue via an autocatalytic post-translational modification. Two non-identical subunits are generated from the proenzyme in this reaction, and the pyruvate is formed at the N-terminus of the alpha chain, which is derived from the carboxyl end of the proenzyme. The post-translation cleavage follows an unusual pathway, termed non-hydrolytic serinolysis, in which the side chain hydroxyl group of the serine supplies its oxygen atom to form the C-terminus of the beta chain, while the remainder of the serine residue undergoes an oxidative deamination to produce ammonia and the pyruvoyl group blocking the N-terminus of the alpha chain.

It carries out the reaction S-adenosyl-L-methionine + H(+) = S-adenosyl 3-(methylsulfanyl)propylamine + CO2. The protein operates within amine and polyamine biosynthesis; S-adenosylmethioninamine biosynthesis; S-adenosylmethioninamine from S-adenosyl-L-methionine: step 1/1. Essential for biosynthesis of the polyamines spermidine and spermine. Promotes maintenance and self-renewal of embryonic stem cells, by maintaining spermine levels. The polypeptide is S-adenosylmethionine decarboxylase proenzyme (AMD1) (Mesocricetus auratus (Golden hamster)).